The sequence spans 392 residues: Basic salivary proline-rich protein 1 (392 aa).

An N-terminal signal peptide occupies residues 1–16; that stretch reads MLLILLSVALLALSSA. The residue at position 17 (Gln-17) is a Pyrrolidone carboxylic acid. Residues 19–28 are compositionally biased toward polar residues; that stretch reads LNEDVSQEES. Residues 19-392 form a disordered region; the sequence is LNEDVSQEES…QGGRPSRPPQ (374 aa). Positions 34–47 are enriched in low complexity; it reads GNPQGPSPQGGNKP. Ser-40 carries the phosphoserine; alternate modification. Ser-40 is a glycosylation site (O-linked (Hex) serine; alternate). The span at 48–83 shows a compositional bias: pro residues; the sequence is QGPPPPPGKPQGPPPQGGNKPQGPPPPGKPQGPPPQ. Repeat copies occupy residues 53 to 72, 73 to 92, 93 to 112, 114 to 133, 134 to 153, 154 to 173, 175 to 194, 195 to 214, 215 to 234, 236 to 255, 256 to 275, 276 to 295, 297 to 316, 317 to 336, and 338 to 357. Positions 53–357 are 15 X 20 AA approximate tandem repeats of P-P-G-K-P-Q-G-P-P-[PAQ]-Q-[GE]-[GD]-[NKS]-[KSQRN]-[PRQS]-[QS] [GPS]-[PQAR]-[PSR]; it reads PPGKPQGPPP…QEGNNPQGPP (305 aa). Ser-87 carries O-linked (HexNAc...) serine glycosylation. A compositionally biased stretch (pro residues) spans 91-144; the sequence is RSPPGKPQGPPPQGGNQPQGPPPPPGKPQGPPPQGGNKPQGPPPPGKPQGPPPQ. Residue Ser-92 is modified to Phosphoserine. Ser-150 bears the Phosphoserine; alternate mark. Ser-150 carries O-linked (Hex) serine; alternate glycosylation. 4 stretches are compositionally biased toward pro residues: residues 152 to 205, 213 to 243, 252 to 266, and 274 to 324; these read RSPP…PPPQ, RSPP…PQGP, QGPP…PPPQ, and QSPP…PQGP. Residues 325-334 show a composition bias toward low complexity; it reads PAQGGSKSQS. The O-linked (HexNAc...) serine glycan is linked to Ser-330. Residues 354–392 are compositionally biased toward pro residues; sequence QGPPPPAGGNPQQPQAPPAGQPQGPPRPPQGGRPSRPPQ.

In terms of processing, O-glycosylated. O-glycosylation on Ser-87 is prevalent in head and neck cancer patients. O-Glycosylation on Ser-330 has a 5 times prevalence in head and neck cancers. Proteolytically cleaved at the tripeptide Xaa-Pro-Gln, where Xaa in the P(3) position is mostly lysine. The endoprotease may be of microbial origin. Post-translationally, pyroglutamate formation occurs on terminal Gln residues of cleaved peptides. Besides on the N-terminal of mature PBR1, pyroglutamate formation found on at least Gln-58.

It localises to the secreted. The sequence is that of Basic salivary proline-rich protein 1 (PRB1) from Homo sapiens (Human).